The primary structure comprises 330 residues: GTPase Obg (330 aa).

In terms of domain architecture, Obg spans 1–159; that stretch reads MHFIDEVKIY…MWIHLSLKLL (159 aa). The region spanning 160–327 is the OBG-type G domain; that stretch reads SDVGLVGLPN…IVKLALETIK (168 aa). GTP-binding positions include 166 to 173, 191 to 195, 212 to 215, 279 to 282, and 308 to 310; these read GLPNAGKS, FTTLV, DIPG, NKCD, and STC. 2 residues coordinate Mg(2+): Ser173 and Thr193.

The protein belongs to the TRAFAC class OBG-HflX-like GTPase superfamily. OBG GTPase family. Monomer. Requires Mg(2+) as cofactor.

It is found in the cytoplasm. An essential GTPase which binds GTP, GDP and possibly (p)ppGpp with moderate affinity, with high nucleotide exchange rates and a fairly low GTP hydrolysis rate. Plays a role in control of the cell cycle, stress response, ribosome biogenesis and in those bacteria that undergo differentiation, in morphogenesis control. This Rickettsia rickettsii (strain Iowa) protein is GTPase Obg.